A 959-amino-acid chain; its full sequence is Autophagy-related protein 18g (959 aa).

WD repeat units lie at residues 376-416 (AHTS…SHNA) and 438-479 (ITSA…AAFQ). Residues 802 to 832 (GSIESAESSEEGSTKQMENLHDSDHMSNSIK) are disordered.

Belongs to the WD repeat PROPPIN family. In terms of assembly, component of the PI(3,5)P2 regulatory complex at least composed of ATG18, SAC/FIG4, FAB1 and VAC14. As to expression, expressed in leaves.

The protein resides in the preautophagosomal structure membrane. It localises to the vacuole membrane. In terms of biological role, the PI(3,5)P2 regulatory complex regulates both the synthesis and turnover of phosphatidylinositol 3,5-bisphosphate (PtdIns(3,5)P2). Required for autophagy. This Arabidopsis thaliana (Mouse-ear cress) protein is Autophagy-related protein 18g (ATG18G).